A 214-amino-acid chain; its full sequence is Protein-L-isoaspartate O-methyltransferase 1 (214 aa).

Residue serine 62 is part of the active site.

The protein belongs to the methyltransferase superfamily. L-isoaspartyl/D-aspartyl protein methyltransferase family.

It is found in the cytoplasm. The catalysed reaction is [protein]-L-isoaspartate + S-adenosyl-L-methionine = [protein]-L-isoaspartate alpha-methyl ester + S-adenosyl-L-homocysteine. Catalyzes the methyl esterification of L-isoaspartyl residues in peptides and proteins that result from spontaneous decomposition of normal L-aspartyl and L-asparaginyl residues. It plays a role in the repair and/or degradation of damaged proteins. In Syntrophobacter fumaroxidans (strain DSM 10017 / MPOB), this protein is Protein-L-isoaspartate O-methyltransferase 1.